The sequence spans 248 residues: Phosphatidylglycerol--prolipoprotein diacylglyceryl transferase (248 aa).

A run of 3 helical transmembrane segments spans residues 6–26 (FTLFGIDIMWYGILMACGMIL), 47–67 (NIAIIAIPVGLICARIYYVVF), and 84–104 (GGGLAIHGGLIGGILAGYIYT). Arginine 130 is a binding site for a 1,2-diacyl-sn-glycero-3-phospho-(1'-sn-glycerol). 2 helical membrane passes run 186-206 (GQVIVTYITLYSIGRFFIEGL) and 218-238 (MAQVISLIGVIGGIIAHVYLS).

The protein belongs to the Lgt family.

It is found in the cell membrane. The catalysed reaction is L-cysteinyl-[prolipoprotein] + a 1,2-diacyl-sn-glycero-3-phospho-(1'-sn-glycerol) = an S-1,2-diacyl-sn-glyceryl-L-cysteinyl-[prolipoprotein] + sn-glycerol 1-phosphate + H(+). Its pathway is protein modification; lipoprotein biosynthesis (diacylglyceryl transfer). Its function is as follows. Catalyzes the transfer of the diacylglyceryl group from phosphatidylglycerol to the sulfhydryl group of the N-terminal cysteine of a prolipoprotein, the first step in the formation of mature lipoproteins. This is Phosphatidylglycerol--prolipoprotein diacylglyceryl transferase from Clostridioides difficile (strain 630) (Peptoclostridium difficile).